A 485-amino-acid polypeptide reads, in one-letter code: Isocitrate dehydrogenase [NADP], chloroplastic/mitochondrial (485 aa).

A chloroplast and mitochondrion-targeting transit peptide spans 1-65; the sequence is MLNKLTHGVF…VQFHRASAVR (65 aa). Residues 147–149 and Arg-154 each bind NADP(+); that span reads TIT. A substrate-binding site is contributed by Thr-149. Residues 166 to 172, Arg-181, and Arg-204 contribute to the substrate site; that span reads SPNGTIR. Position 323 (Asp-323) interacts with Mn(2+). Lys-331 serves as a coordination point for NADP(+). A Mn(2+)-binding site is contributed by Asp-346. NADP(+) contacts are provided by residues 381–386 and Asn-399; that span reads GTVTRH.

This sequence belongs to the isocitrate and isopropylmalate dehydrogenases family. Mg(2+) serves as cofactor. Mn(2+) is required as a cofactor.

It localises to the plastid. It is found in the chloroplast. The protein localises to the mitochondrion. The enzyme catalyses D-threo-isocitrate + NADP(+) = 2-oxoglutarate + CO2 + NADPH. Its function is as follows. May be involved in response to oxidative stresses. This Arabidopsis thaliana (Mouse-ear cress) protein is Isocitrate dehydrogenase [NADP], chloroplastic/mitochondrial.